The chain runs to 164 residues: UPF0304 protein YfbU (164 aa).

Belongs to the UPF0304 family.

This chain is UPF0304 protein YfbU, found in Escherichia coli O139:H28 (strain E24377A / ETEC).